Consider the following 294-residue polypeptide: 4-hydroxy-tetrahydrodipicolinate synthase (294 aa).

Residue Thr-47 coordinates pyruvate. The active-site Proton donor/acceptor is Tyr-135. Lys-163 acts as the Schiff-base intermediate with substrate in catalysis. Residue Ile-206 participates in pyruvate binding.

This sequence belongs to the DapA family. Homodimer.

The protein localises to the cytoplasm. The enzyme catalyses L-aspartate 4-semialdehyde + pyruvate = (2S,4S)-4-hydroxy-2,3,4,5-tetrahydrodipicolinate + H2O + H(+). The protein operates within amino-acid biosynthesis; L-lysine biosynthesis via DAP pathway; (S)-tetrahydrodipicolinate from L-aspartate: step 3/4. Catalyzes the condensation of (S)-aspartate-beta-semialdehyde [(S)-ASA] and pyruvate to 4-hydroxy-tetrahydrodipicolinate (HTPA). This is 4-hydroxy-tetrahydrodipicolinate synthase from Staphylococcus epidermidis (strain ATCC 35984 / DSM 28319 / BCRC 17069 / CCUG 31568 / BM 3577 / RP62A).